The primary structure comprises 447 residues: Probable glycine dehydrogenase (decarboxylating) subunit 1 (447 aa).

It belongs to the GcvP family. N-terminal subunit subfamily. The glycine cleavage system is composed of four proteins: P, T, L and H. In this organism, the P 'protein' is a heterodimer of two subunits.

It carries out the reaction N(6)-[(R)-lipoyl]-L-lysyl-[glycine-cleavage complex H protein] + glycine + H(+) = N(6)-[(R)-S(8)-aminomethyldihydrolipoyl]-L-lysyl-[glycine-cleavage complex H protein] + CO2. Functionally, the glycine cleavage system catalyzes the degradation of glycine. The P protein binds the alpha-amino group of glycine through its pyridoxal phosphate cofactor; CO(2) is released and the remaining methylamine moiety is then transferred to the lipoamide cofactor of the H protein. This chain is Probable glycine dehydrogenase (decarboxylating) subunit 1, found in Azorhizobium caulinodans (strain ATCC 43989 / DSM 5975 / JCM 20966 / LMG 6465 / NBRC 14845 / NCIMB 13405 / ORS 571).